Consider the following 130-residue polypeptide: ATP synthase epsilon chain (130 aa).

Belongs to the ATPase epsilon chain family. In terms of assembly, F-type ATPases have 2 components, CF(1) - the catalytic core - and CF(0) - the membrane proton channel. CF(1) has five subunits: alpha(3), beta(3), gamma(1), delta(1), epsilon(1). CF(0) has three main subunits: a, b and c.

Its subcellular location is the cell inner membrane. Produces ATP from ADP in the presence of a proton gradient across the membrane. The sequence is that of ATP synthase epsilon chain from Campylobacter lari (strain RM2100 / D67 / ATCC BAA-1060).